Reading from the N-terminus, the 419-residue chain is Histidine--tRNA ligase (419 aa).

Belongs to the class-II aminoacyl-tRNA synthetase family. As to quaternary structure, homodimer.

It localises to the cytoplasm. It carries out the reaction tRNA(His) + L-histidine + ATP = L-histidyl-tRNA(His) + AMP + diphosphate + H(+). The protein is Histidine--tRNA ligase of Trichlorobacter lovleyi (strain ATCC BAA-1151 / DSM 17278 / SZ) (Geobacter lovleyi).